Reading from the N-terminus, the 308-residue chain is Protoheme IX farnesyltransferase (308 aa).

A run of 8 helical transmembrane segments spans residues 31–51 (VIEL…RGTV), 53–73 (PLLI…ANAL), 102–122 (NALV…WWTT), 124–144 (LLSG…YTLL), 149–169 (TSQN…IGWS), 170–190 (AVTG…FFWT), 240–260 (LALA…VWFL), and 288–308 (YLAV…PHLF).

It belongs to the UbiA prenyltransferase family. Protoheme IX farnesyltransferase subfamily.

It is found in the cell membrane. The catalysed reaction is heme b + (2E,6E)-farnesyl diphosphate + H2O = Fe(II)-heme o + diphosphate. It functions in the pathway porphyrin-containing compound metabolism; heme O biosynthesis; heme O from protoheme: step 1/1. Functionally, converts heme B (protoheme IX) to heme O by substitution of the vinyl group on carbon 2 of heme B porphyrin ring with a hydroxyethyl farnesyl side group. The protein is Protoheme IX farnesyltransferase of Mycobacterium avium (strain 104).